Consider the following 322-residue polypeptide: Transcription factor Atoh8 (322 aa).

Disordered regions lie at residues 77-96, 101-144, and 159-221; these read PVPA…DTAR, IRAP…EAHS, and PPAR…ATAA. Basic and acidic residues predominate over residues 101-111; that stretch reads IRAPEVSDARK. The tract at residues 231–244 is basic motif; degenerate; sequence TRRLLANARERTRV. The bHLH domain occupies 231–283; that stretch reads TRRLLANARERTRVHTISAAFEALRKQVPCYSYGQKLSKLAILRIACNYILSL. Residues 245 to 283 form a helix-loop-helix motif region; it reads HTISAAFEALRKQVPCYSYGQKLSKLAILRIACNYILSL.

In terms of assembly, efficient DNA binding requires dimerization with another bHLH protein. Interacts with NEUROG3 and NEUROD1. Interacts with ZFPM2; mediates indirect interaction with GATA4. Forms a heterodimer with TCF3; repress transcription of TCF3 and TCF3/NEUROG3 dimer-induced transactivation of E box-dependent promoters. In terms of tissue distribution, expressed by subsets of mature neurons. Expressed in kidney (podocytes). Expression is restricted to the atria, lung mesenchyme, and vascular smooth muscle.

Its subcellular location is the nucleus. The protein resides in the nucleus speckle. The protein localises to the cytoplasm. In terms of biological role, transcription factor that binds a palindromic (canonical) core consensus DNA sequence 5'-CANNTG- 3' known as an E-box element, possibly as a heterodimer with other bHLH proteins. Regulates endothelial cell proliferation, migration and tube-like structures formation. Modulates endothelial cell differentiation through NOS3. May be implicated in specification and differentiation of neuronal cell lineages in the brain. May participate in kidney development and may be involved in podocyte differentiation. During early embryonic development is involved in tissue-specific differentiation processes that are dependent on class II bHLH factors and namely modulates the differentiation program initiated by the pro-endocrine factor NEUROG3. During myogenesis, may play a role during the transition of myoblasts from the proliferative phase to the differentiation phase. Positively regulates HAMP transcription in two ways, firstly by acting directly on the HAMP promoter via E-boxes binding and indirectly through increased phosphorylation of SMAD protein complex. Repress NEUROG3-dependent gene activation in a gene-specific manner through at least two mechanisms; requires only either the sequestering of a general partner such as TCF3 through heterodimerization, either also requires binding of the bHLH domain to DNA via a basic motif. This is Transcription factor Atoh8 from Mus musculus (Mouse).